The primary structure comprises 427 residues: 3-phosphoshikimate 1-carboxyvinyltransferase (427 aa).

3-phosphoshikimate contacts are provided by K22, S23, and R27. Phosphoenolpyruvate is bound at residue K22. 2 residues coordinate phosphoenolpyruvate: G96 and R124. Positions 169, 170, 171, 197, 313, 336, and 340 each coordinate 3-phosphoshikimate. Residue Q171 participates in phosphoenolpyruvate binding. D313 acts as the Proton acceptor in catalysis. Positions 344, 386, and 411 each coordinate phosphoenolpyruvate.

The protein belongs to the EPSP synthase family. In terms of assembly, monomer.

It is found in the cytoplasm. The enzyme catalyses 3-phosphoshikimate + phosphoenolpyruvate = 5-O-(1-carboxyvinyl)-3-phosphoshikimate + phosphate. The protein operates within metabolic intermediate biosynthesis; chorismate biosynthesis; chorismate from D-erythrose 4-phosphate and phosphoenolpyruvate: step 6/7. Functionally, catalyzes the transfer of the enolpyruvyl moiety of phosphoenolpyruvate (PEP) to the 5-hydroxyl of shikimate-3-phosphate (S3P) to produce enolpyruvyl shikimate-3-phosphate and inorganic phosphate. This Escherichia coli O127:H6 (strain E2348/69 / EPEC) protein is 3-phosphoshikimate 1-carboxyvinyltransferase.